The following is a 329-amino-acid chain: Taste receptor type 2 member 134 (329 aa).

Residues 1 to 27 (MRCSLRGCVQGRGGKSGVSLSKFSPKK) lie on the Extracellular side of the membrane. The chain crosses the membrane as a helical span at residues 28–48 (MSFFFIFMVIFCIQSLVALLQ). Over 49–68 (NGFLATVLGREWVRSQGLPA) the chain is Cytoplasmic. The helical transmembrane segment at 69–89 (GDMIVACLAASRFCLHGVAIV) threads the bilayer. Topologically, residues 90-121 (NNFLTFVKLWSQKIYFSVLWDFVNTVNFWCTT) are extracellular. The chain crosses the membrane as a helical span at residues 122-142 (WLAIFYCVKISSFSHPIFFWI). Over 143–153 (KWRISRSVPRL) the chain is Cytoplasmic. The chain crosses the membrane as a helical span at residues 154-174 (LLGSLVIGGLSAVSSATGNTI). Topologically, residues 175–201 (AFQMTACENYTLAYRTRAFYAYYFRCH) are extracellular. Asparagine 183 carries N-linked (GlcNAc...) asparagine glycosylation. The chain crosses the membrane as a helical span at residues 202–222 (AMLMWIIPFFLFLLSVILLMF). At 223–251 (SLYRHLEHMRYRRPWSHDYSTQAHTMALK) the chain is on the cytoplasmic side. A helical membrane pass occupies residues 252 to 272 (SLAFFLVFYTSYVLFLVISVT). Residues 273–282 (RVVNVHSSWH) lie on the Extracellular side of the membrane. Residues 283–303 (WAWEVITYMGILLHSTILTLS) form a helical membrane-spanning segment. The Cytoplasmic portion of the chain corresponds to 304–329 (NPKMRKALKIKFPDLCVARSQDKRRG).

Belongs to the G-protein coupled receptor T2R family. In terms of tissue distribution, expressed in tongue and gastrointestinal tract.

It is found in the membrane. Functionally, putative taste receptor which may play a role in the perception of bitterness. This is Taste receptor type 2 member 134 from Rattus norvegicus (Rat).